The primary structure comprises 524 residues: Anthranilate synthase component 1 (524 aa).

Residues S55 and 297–299 contribute to the L-tryptophan site; that span reads PYM. Residue 332 to 333 coordinates chorismate; sequence GT. E359 contacts Mg(2+). Residues Y447, R467, 485–487, and G487 contribute to the chorismate site; that span reads GAG. E500 is a binding site for Mg(2+).

The protein belongs to the anthranilate synthase component I family. In terms of assembly, heterotetramer consisting of two non-identical subunits: a beta subunit (TrpG) and a large alpha subunit (TrpE). Mg(2+) is required as a cofactor.

The catalysed reaction is chorismate + L-glutamine = anthranilate + pyruvate + L-glutamate + H(+). It participates in amino-acid biosynthesis; L-tryptophan biosynthesis; L-tryptophan from chorismate: step 1/5. Its activity is regulated as follows. Feedback inhibited by tryptophan. Functionally, part of a heterotetrameric complex that catalyzes the two-step biosynthesis of anthranilate, an intermediate in the biosynthesis of L-tryptophan. In the first step, the glutamine-binding beta subunit (TrpG) of anthranilate synthase (AS) provides the glutamine amidotransferase activity which generates ammonia as a substrate that, along with chorismate, is used in the second step, catalyzed by the large alpha subunit of AS (TrpE) to produce anthranilate. In the absence of TrpG, TrpE can synthesize anthranilate directly from chorismate and high concentrations of ammonia. This Haloferax volcanii (strain ATCC 29605 / DSM 3757 / JCM 8879 / NBRC 14742 / NCIMB 2012 / VKM B-1768 / DS2) (Halobacterium volcanii) protein is Anthranilate synthase component 1 (trpE).